The primary structure comprises 86 residues: Curamycin polyketide synthase acyl carrier protein (86 aa).

One can recognise a Carrier domain in the interval glutamine 7–alanine 86. Serine 44 carries the post-translational modification O-(pantetheine 4'-phosphoryl)serine.

4'-phosphopantetheine is transferred from CoA to a specific serine of the apo-ACP-like protein.

It functions in the pathway antibiotic biosynthesis; curamycin biosynthesis. Functionally, acyl carrier protein. This is Curamycin polyketide synthase acyl carrier protein (curE) from Streptomyces cyaneus (Streptomyces curacoi).